The sequence spans 356 residues: DNA polymerase IV (356 aa).

Residues 4 to 185 (IIHIDMDCYY…LALGKIPGVG (182 aa)) enclose the UmuC domain. Aspartate 8 and aspartate 103 together coordinate Mg(2+). Glutamate 104 is a catalytic residue.

Belongs to the DNA polymerase type-Y family. As to quaternary structure, monomer. Mg(2+) is required as a cofactor.

It is found in the cytoplasm. It carries out the reaction DNA(n) + a 2'-deoxyribonucleoside 5'-triphosphate = DNA(n+1) + diphosphate. Functionally, poorly processive, error-prone DNA polymerase involved in untargeted mutagenesis. Copies undamaged DNA at stalled replication forks, which arise in vivo from mismatched or misaligned primer ends. These misaligned primers can be extended by PolIV. Exhibits no 3'-5' exonuclease (proofreading) activity. May be involved in translesional synthesis, in conjunction with the beta clamp from PolIII. This Pseudoalteromonas atlantica (strain T6c / ATCC BAA-1087) protein is DNA polymerase IV.